The primary structure comprises 316 residues: Ribosomal RNA small subunit methyltransferase H (316 aa).

S-adenosyl-L-methionine contacts are provided by residues 35–37 (SGH), D55, F84, D105, and Q112.

Belongs to the methyltransferase superfamily. RsmH family.

The protein localises to the cytoplasm. It carries out the reaction cytidine(1402) in 16S rRNA + S-adenosyl-L-methionine = N(4)-methylcytidine(1402) in 16S rRNA + S-adenosyl-L-homocysteine + H(+). Functionally, specifically methylates the N4 position of cytidine in position 1402 (C1402) of 16S rRNA. The polypeptide is Ribosomal RNA small subunit methyltransferase H (Streptococcus pyogenes serotype M18 (strain MGAS8232)).